Consider the following 430-residue polypeptide: Serine--tRNA ligase (430 aa).

An L-serine-binding site is contributed by 237 to 239 (TAE). Residue 268–270 (RSE) coordinates ATP. Glutamate 291 serves as a coordination point for L-serine. 355–358 (EISS) lines the ATP pocket. L-serine is bound at residue serine 391.

This sequence belongs to the class-II aminoacyl-tRNA synthetase family. Type-1 seryl-tRNA synthetase subfamily. In terms of assembly, homodimer. The tRNA molecule binds across the dimer.

It localises to the cytoplasm. The enzyme catalyses tRNA(Ser) + L-serine + ATP = L-seryl-tRNA(Ser) + AMP + diphosphate + H(+). It catalyses the reaction tRNA(Sec) + L-serine + ATP = L-seryl-tRNA(Sec) + AMP + diphosphate + H(+). It functions in the pathway aminoacyl-tRNA biosynthesis; selenocysteinyl-tRNA(Sec) biosynthesis; L-seryl-tRNA(Sec) from L-serine and tRNA(Sec): step 1/1. Catalyzes the attachment of serine to tRNA(Ser). Is also able to aminoacylate tRNA(Sec) with serine, to form the misacylated tRNA L-seryl-tRNA(Sec), which will be further converted into selenocysteinyl-tRNA(Sec). The chain is Serine--tRNA ligase from Klebsiella pneumoniae (strain 342).